Here is a 355-residue protein sequence, read N- to C-terminus: F-box only protein 32 (355 aa).

A Nuclear localization signal motif is present at residues 62–67 (KKRKKD). The Nuclear export signal signature appears at 169-173 (LLQTL). One can recognise an F-box domain in the interval 223-271 (LTITDLPVCLQLNIMQRLSDGRDLVSLGQAAPDLHVLSEDRLLWKRLCQ). The Bipartite nuclear localization signal signature appears at 280-295 (RKRLILSDKGQLDWKK).

As to quaternary structure, part of the SCF (SKP1-CUL1-F-box) E3 ubiquitin-protein ligase complex SCF(FBXO32) formed of CUL1, SKP1, RBX1 and FBXO32. In terms of tissue distribution, specifically expressed in cardiac and skeletal muscle.

It localises to the cytoplasm. The protein localises to the nucleus. The protein operates within protein modification; protein ubiquitination. In terms of biological role, substrate recognition component of a SCF (SKP1-CUL1-F-box protein) E3 ubiquitin-protein ligase complex which mediates the ubiquitination and subsequent proteasomal degradation of target proteins. Probably recognizes and binds to phosphorylated target proteins during skeletal muscle atrophy. Recognizes TERF1. The protein is F-box only protein 32 (Fbxo32) of Mus musculus (Mouse).